The chain runs to 459 residues: cAMP-dependent protein kinase regulatory subunit (459 aa).

The tract at residues 30-219 (QFCANYFNTK…TLANNLKNNF (190 aa)) is dimerization and phosphorylation. 2 disordered regions span residues 78–109 (VNDR…DTKT) and 125–168 (FDVK…PSSK). The segment covering 95 to 109 (HSNHDEDPHAKDTKT) has biased composition (basic and acidic residues). Low complexity predominate over residues 146-168 (KPSSSSQPNQQSASASSKTPSSK). Position 180 is a phosphoserine (Ser-180). Residues 220–335 (LFKQ…FLKD), Glu-285, Arg-294, 338–454 (VLKS…KSQD), Glu-404, and Arg-413 contribute to the 3',5'-cyclic AMP site.

The protein belongs to the cAMP-dependent kinase regulatory chain family. Tetramer, composed of 2 regulatory (R) and 2 catalytic (C) subunits. In the presence of cAMP it dissociates into 2 active monomeric C subunits and an R dimer.

This is cAMP-dependent protein kinase regulatory subunit (BCY1) from Candida albicans (strain SC5314 / ATCC MYA-2876) (Yeast).